Consider the following 262-residue polypeptide: tRNA pseudouridine synthase A (262 aa).

The active-site Nucleophile is Asp56. Tyr114 contributes to the substrate binding site.

It belongs to the tRNA pseudouridine synthase TruA family. Homodimer.

It carries out the reaction uridine(38/39/40) in tRNA = pseudouridine(38/39/40) in tRNA. Functionally, formation of pseudouridine at positions 38, 39 and 40 in the anticodon stem and loop of transfer RNAs. The protein is tRNA pseudouridine synthase A of Lactiplantibacillus plantarum (strain ATCC BAA-793 / NCIMB 8826 / WCFS1) (Lactobacillus plantarum).